The primary structure comprises 83 residues: MKASMFLALAGLVLLFVVGYASESEEKEFPRELLSKIFAVDDFKGEERGCKGFGDSCTPGKNECCPNYACSSKHKWCKVNLGK.

The N-terminal stretch at 1 to 21 is a signal peptide; sequence MKASMFLALAGLVLLFVVGYA. Positions 22 to 48 are excised as a propeptide; the sequence is SESEEKEFPRELLSKIFAVDDFKGEER. Cystine bridges form between cysteine 50/cysteine 65, cysteine 57/cysteine 70, and cysteine 64/cysteine 77. A Leucine amide modification is found at leucine 81.

Belongs to the neurotoxin 10 (Hwtx-1) family. 15 (Hntx-3) subfamily. As to quaternary structure, monomer. As to expression, expressed by the venom gland.

The protein localises to the secreted. Its function is as follows. Lethal neurotoxin. Selectively blocks tetrodotoxin-sensitive voltage-gated sodium channels (Nav). Does not affect tetrodotoxin-resistant voltage-gated sodium channels or calcium channels. In Cyriopagopus hainanus (Chinese bird spider), this protein is Mu-theraphotoxin-Hhn2i.